A 100-amino-acid polypeptide reads, in one-letter code: Aspartyl/glutamyl-tRNA(Asn/Gln) amidotransferase subunit C (100 aa).

The protein belongs to the GatC family. In terms of assembly, heterotrimer of A, B and C subunits.

The enzyme catalyses L-glutamyl-tRNA(Gln) + L-glutamine + ATP + H2O = L-glutaminyl-tRNA(Gln) + L-glutamate + ADP + phosphate + H(+). It catalyses the reaction L-aspartyl-tRNA(Asn) + L-glutamine + ATP + H2O = L-asparaginyl-tRNA(Asn) + L-glutamate + ADP + phosphate + 2 H(+). Its function is as follows. Allows the formation of correctly charged Asn-tRNA(Asn) or Gln-tRNA(Gln) through the transamidation of misacylated Asp-tRNA(Asn) or Glu-tRNA(Gln) in organisms which lack either or both of asparaginyl-tRNA or glutaminyl-tRNA synthetases. The reaction takes place in the presence of glutamine and ATP through an activated phospho-Asp-tRNA(Asn) or phospho-Glu-tRNA(Gln). This chain is Aspartyl/glutamyl-tRNA(Asn/Gln) amidotransferase subunit C, found in Streptococcus pneumoniae (strain Taiwan19F-14).